The chain runs to 377 residues: Queuine tRNA-ribosyltransferase (377 aa).

The Proton acceptor role is filled by D89. Substrate-binding positions include 89 to 93, D143, Q188, and G215; that span reads DSGGF. The segment at 246-252 is RNA binding; that stretch reads GVGKPED. The Nucleophile role is filled by D265. The tract at residues 270-274 is RNA binding; important for wobble base 34 recognition; sequence TRNAR. Zn(2+) is bound by residues C303, C305, C308, and H334.

Belongs to the queuine tRNA-ribosyltransferase family. As to quaternary structure, homodimer. Within each dimer, one monomer is responsible for RNA recognition and catalysis, while the other monomer binds to the replacement base PreQ1. Requires Zn(2+) as cofactor.

It catalyses the reaction 7-aminomethyl-7-carbaguanine + guanosine(34) in tRNA = 7-aminomethyl-7-carbaguanosine(34) in tRNA + guanine. It participates in tRNA modification; tRNA-queuosine biosynthesis. In terms of biological role, catalyzes the base-exchange of a guanine (G) residue with the queuine precursor 7-aminomethyl-7-deazaguanine (PreQ1) at position 34 (anticodon wobble position) in tRNAs with GU(N) anticodons (tRNA-Asp, -Asn, -His and -Tyr). Catalysis occurs through a double-displacement mechanism. The nucleophile active site attacks the C1' of nucleotide 34 to detach the guanine base from the RNA, forming a covalent enzyme-RNA intermediate. The proton acceptor active site deprotonates the incoming PreQ1, allowing a nucleophilic attack on the C1' of the ribose to form the product. After dissociation, two additional enzymatic reactions on the tRNA convert PreQ1 to queuine (Q), resulting in the hypermodified nucleoside queuosine (7-(((4,5-cis-dihydroxy-2-cyclopenten-1-yl)amino)methyl)-7-deazaguanosine). The chain is Queuine tRNA-ribosyltransferase from Acinetobacter baumannii (strain SDF).